The primary structure comprises 364 residues: Aminomethyltransferase (364 aa).

The protein belongs to the GcvT family. As to quaternary structure, the glycine cleavage system is composed of four proteins: P, T, L and H.

The catalysed reaction is N(6)-[(R)-S(8)-aminomethyldihydrolipoyl]-L-lysyl-[protein] + (6S)-5,6,7,8-tetrahydrofolate = N(6)-[(R)-dihydrolipoyl]-L-lysyl-[protein] + (6R)-5,10-methylene-5,6,7,8-tetrahydrofolate + NH4(+). Functionally, the glycine cleavage system catalyzes the degradation of glycine. The sequence is that of Aminomethyltransferase from Proteus mirabilis (strain HI4320).